The sequence spans 354 residues: Carbonic anhydrase 12 (354 aa).

The signal sequence occupies residues 1–24; the sequence is MPRRSLHAAAVLLLVILKEQPSSP. Residues 25–301 lie on the Extracellular side of the membrane; it reads APVNGSKWTY…VQVCTAAGLS (277 aa). N-linked (GlcNAc...) asparagine glycosylation is found at asparagine 28 and asparagine 80. The 260-residue stretch at 30-289 folds into the Alpha-carbonic anhydrase domain; that stretch reads SKWTYFGPDG…FDERLVYTSF (260 aa). Cysteine 50 and cysteine 230 are disulfide-bonded. The active-site Proton donor/acceptor is histidine 94. Residues histidine 119, histidine 121, and histidine 145 each coordinate Zn(2+). Asparagine 162 carries an N-linked (GlcNAc...) asparagine glycan. 226–227 lines the substrate pocket; it reads TT. Residues 302-322 traverse the membrane as a helical segment; the sequence is LGIILSLALAGILGICIVVVV. Over 323–354 the chain is Cytoplasmic; the sequence is SIWLFRRKSIKKGDNKGVIYKPATKMETEAHA.

It belongs to the alpha-carbonic anhydrase family. Homodimer. Zn(2+) is required as a cofactor. In terms of tissue distribution, highly expressed in colon, kidney, prostate, intestine and activated lymphocytes. Expressed at much higher levels in the renal cell cancers than in surrounding normal kidney tissue. Moderately expressed in pancreas, ovary and testis. Expressed in sweat glands and bronchiolar epithelium.

Its subcellular location is the membrane. The protein resides in the cell membrane. The catalysed reaction is hydrogencarbonate + H(+) = CO2 + H2O. Its activity is regulated as follows. Inhibited by coumarins, saccharin, sulfonamide derivatives such as acetazolamide (AZA), benzenesulfonamide and derivatives (4-carboxyethylbenzene-sulfonamide, 4-carboxyethylbenzene-sulfonamide ethyl ester, 4-(acetyl-2-aminoethyl)benzene-sulfonamide, 4-aminoethylbenzene-sulfonamide) and Foscarnet (phosphonoformate trisodium salt). In terms of biological role, reversible hydration of carbon dioxide. This Homo sapiens (Human) protein is Carbonic anhydrase 12.